We begin with the raw amino-acid sequence, 425 residues long: Formyl-CoA:oxalate CoA-transferase (425 aa).

CoA is bound by residues 17-18 (QS), Arg38, 72-75 (LDTK), 96-98 (NFG), Arg104, and 136-139 (KVYE). Asp168 functions as the Nucleophile in the catalytic mechanism. 247 to 249 (GGQ) serves as a coordination point for substrate.

Belongs to the CoA-transferase III family. Frc subfamily. As to quaternary structure, homodimer.

It carries out the reaction formyl-CoA + oxalate = oxalyl-CoA + formate. It participates in metabolic intermediate degradation; oxalate degradation; CO(2) and formate from oxalate: step 1/2. Its function is as follows. Involved in the catabolism of oxalate and in the adapatation to low pH via the induction of the oxalate-dependent acid tolerance response (ATR). Catalyzes the transfer of the CoA moiety from formyl-CoA to oxalate. This Rhodopseudomonas palustris (strain TIE-1) protein is Formyl-CoA:oxalate CoA-transferase.